Here is a 310-residue protein sequence, read N- to C-terminus: Homoserine kinase (310 aa).

P91–A101 contributes to the ATP binding site.

Belongs to the GHMP kinase family. Homoserine kinase subfamily.

Its subcellular location is the cytoplasm. It carries out the reaction L-homoserine + ATP = O-phospho-L-homoserine + ADP + H(+). It functions in the pathway amino-acid biosynthesis; L-threonine biosynthesis; L-threonine from L-aspartate: step 4/5. In terms of biological role, catalyzes the ATP-dependent phosphorylation of L-homoserine to L-homoserine phosphate. This chain is Homoserine kinase, found in Bacillus pumilus (strain SAFR-032).